Reading from the N-terminus, the 226-residue chain is MKMADFVNDGINVDEIVIENQENPNIFINPFKSNPHNVTLSSFRDARIYDLQIRDRPDKYGSGWEVQRSYARKRYGRWMRTVRKNPGFENFRRQPIEVLQTVEDEFGNVYVIRKKINFRAKLPQNMVRRNDGGKNRVNFTAQSVQKGINVDDQDFRPKMFTPKMGREISALRNKLGLTQTDLGKRINVDANVIRNIETGDLVAFNVQDPMVRSLAYALGIRTIKYQ.

Positions 168-226 (ISALRNKLGLTQTDLGKRINVDANVIRNIETGDLVAFNVQDPMVRSLAYALGIRTIKYQ) constitute an HTH cro/C1-type domain. Residues 179 to 198 (QTDLGKRINVDANVIRNIET) constitute a DNA-binding region (H-T-H motif).

This is an uncharacterized protein from Acanthamoeba polyphaga mimivirus (APMV).